A 328-amino-acid chain; its full sequence is Malate dehydrogenase (328 aa).

11-17 (GAAGQIG) is a binding site for NAD(+). 2 residues coordinate substrate: Arg-94 and Arg-100. Residues Asn-107, Gln-114, and 131–133 (VGN) each bind NAD(+). 2 residues coordinate substrate: Asn-133 and Arg-164. Residue His-189 is the Proton acceptor of the active site.

Belongs to the LDH/MDH superfamily. MDH type 2 family.

The enzyme catalyses (S)-malate + NAD(+) = oxaloacetate + NADH + H(+). Its function is as follows. Catalyzes the reversible oxidation of malate to oxaloacetate. The protein is Malate dehydrogenase of Xanthomonas campestris pv. campestris (strain 8004).